We begin with the raw amino-acid sequence, 91 residues long: Small ribosomal subunit protein uS15c (91 aa).

The protein belongs to the universal ribosomal protein uS15 family. As to quaternary structure, part of the 30S ribosomal subunit.

It is found in the plastid. The protein resides in the chloroplast. This chain is Small ribosomal subunit protein uS15c (rps15), found in Phalaenopsis aphrodite subsp. formosana (Moth orchid).